The primary structure comprises 321 residues: Phosphatidylglycerol phospholipase C (321 aa).

In terms of domain architecture, GP-PDE spans 2–251 (VEIVGHRAFK…DDPIKARKLC (250 aa)). A helical; Anchor for type IV membrane protein membrane pass occupies residues 297 to 315 (WVHIKLCGWSIAYVIFLFL).

It belongs to the glycerophosphoryl diester phosphodiesterase family.

It is found in the mitochondrion membrane. It localises to the lipid droplet. The enzyme catalyses a 1,2-diacyl-sn-glycero-3-phospho-(1'-sn-glycerol) + H2O = sn-glycerol 3-phosphate + a 1,2-diacyl-sn-glycerol + H(+). Functionally, phosphatidylglycerol phospholipase required for the removal of excess phosphatidylglycerol (PG) via a phospholipase C-type degradation mechanism. This Saccharomyces cerevisiae (strain ATCC 204508 / S288c) (Baker's yeast) protein is Phosphatidylglycerol phospholipase C (PGC1).